We begin with the raw amino-acid sequence, 360 residues long: Peptide chain release factor 1 (360 aa).

Residue Gln235 is modified to N5-methylglutamine.

It belongs to the prokaryotic/mitochondrial release factor family. Methylated by PrmC. Methylation increases the termination efficiency of RF1.

Its subcellular location is the cytoplasm. Its function is as follows. Peptide chain release factor 1 directs the termination of translation in response to the peptide chain termination codons UAG and UAA. In Paraburkholderia phymatum (strain DSM 17167 / CIP 108236 / LMG 21445 / STM815) (Burkholderia phymatum), this protein is Peptide chain release factor 1.